Reading from the N-terminus, the 437-residue chain is UDP-N-acetylmuramoylalanine--D-glutamate ligase (437 aa).

115 to 121 provides a ligand contact to ATP; that stretch reads GSNGKST.

It belongs to the MurCDEF family.

It localises to the cytoplasm. It catalyses the reaction UDP-N-acetyl-alpha-D-muramoyl-L-alanine + D-glutamate + ATP = UDP-N-acetyl-alpha-D-muramoyl-L-alanyl-D-glutamate + ADP + phosphate + H(+). It functions in the pathway cell wall biogenesis; peptidoglycan biosynthesis. In terms of biological role, cell wall formation. Catalyzes the addition of glutamate to the nucleotide precursor UDP-N-acetylmuramoyl-L-alanine (UMA). This is UDP-N-acetylmuramoylalanine--D-glutamate ligase from Vibrio campbellii (strain ATCC BAA-1116).